The following is a 482-amino-acid chain: Serine carboxypeptidase-like 26 (482 aa).

Positions 1-28 (MAVAAAAAARRRDVSCLLLLLCFSSSMA) are cleaved as a signal peptide. Intrachain disulfides connect C101–C366, C263–C274, and C298–C333. The N-linked (GlcNAc...) asparagine glycan is linked to N152. The active site involves S194. Residues N269, N301, N354, and N375 are each glycosylated (N-linked (GlcNAc...) asparagine). Catalysis depends on residues D403 and H455.

This sequence belongs to the peptidase S10 family.

It is found in the secreted. Acts as a positive regulator of grain size by controlling grain width, filling and weight. High expression of GS5 in the grain is correlated with large grain size. The polypeptide is Serine carboxypeptidase-like 26 (Oryza sativa subsp. japonica (Rice)).